An 879-amino-acid chain; its full sequence is Mediator of RNA polymerase II transcription subunit 14 (879 aa).

Belongs to the Mediator complex subunit 14 family. Component of the Mediator complex.

It is found in the nucleus. Functionally, component of the Mediator complex, a coactivator involved in the regulated transcription of nearly all RNA polymerase II-dependent genes. Mediator functions as a bridge to convey information from gene-specific regulatory proteins to the basal RNA polymerase II transcription machinery. Mediator is recruited to promoters by direct interactions with regulatory proteins and serves as a scaffold for the assembly of a functional preinitiation complex with RNA polymerase II and the general transcription factors. The protein is Mediator of RNA polymerase II transcription subunit 14 (med14) of Schizosaccharomyces pombe (strain 972 / ATCC 24843) (Fission yeast).